The following is a 227-amino-acid chain: ATP phosphoribosyltransferase (227 aa).

The protein belongs to the ATP phosphoribosyltransferase family. Short subfamily. As to quaternary structure, heteromultimer composed of HisG and HisZ subunits.

The protein localises to the cytoplasm. The enzyme catalyses 1-(5-phospho-beta-D-ribosyl)-ATP + diphosphate = 5-phospho-alpha-D-ribose 1-diphosphate + ATP. The protein operates within amino-acid biosynthesis; L-histidine biosynthesis; L-histidine from 5-phospho-alpha-D-ribose 1-diphosphate: step 1/9. Its function is as follows. Catalyzes the condensation of ATP and 5-phosphoribose 1-diphosphate to form N'-(5'-phosphoribosyl)-ATP (PR-ATP). Has a crucial role in the pathway because the rate of histidine biosynthesis seems to be controlled primarily by regulation of HisG enzymatic activity. In Nitrosospira multiformis (strain ATCC 25196 / NCIMB 11849 / C 71), this protein is ATP phosphoribosyltransferase.